A 78-amino-acid chain; its full sequence is Small ribosomal subunit protein bS20 (78 aa).

This sequence belongs to the bacterial ribosomal protein bS20 family.

Its function is as follows. Binds directly to 16S ribosomal RNA. This chain is Small ribosomal subunit protein bS20, found in Streptococcus sanguinis (strain SK36).